We begin with the raw amino-acid sequence, 927 residues long: Huntington interacting protein related 1 (927 aa).

The ENTH domain maps to 7 to 136 (AREVFVRAQL…TFHNKYPVVP (130 aa)). Positions 336-524 (RAVEDEKFAK…RESHANQLVQ (189 aa)) form a coiled coil. One can recognise an I/LWEQ domain in the interval 673 to 914 (QTDIDKDVVG…ALRKQHYHMA (242 aa)).

Belongs to the SLA2 family.

It localises to the cytoplasm. The protein localises to the cytoskeleton. Functionally, regulates pre-synaptic vesicle recycling at neuromuscular junctions of mechanosensory neurons. Plays a role in maintaining a normal defecation cycle. The sequence is that of Huntington interacting protein related 1 (hipr-1) from Caenorhabditis elegans.